Here is a 156-residue protein sequence, read N- to C-terminus: Cyanate hydratase (156 aa).

Residues Arg-96, Glu-99, and Ser-122 contribute to the active site.

Belongs to the cyanase family.

It carries out the reaction cyanate + hydrogencarbonate + 3 H(+) = NH4(+) + 2 CO2. In terms of biological role, catalyzes the reaction of cyanate with bicarbonate to produce ammonia and carbon dioxide. In Burkholderia cenocepacia (strain ATCC BAA-245 / DSM 16553 / LMG 16656 / NCTC 13227 / J2315 / CF5610) (Burkholderia cepacia (strain J2315)), this protein is Cyanate hydratase.